We begin with the raw amino-acid sequence, 349 residues long: Anthranilate phosphoribosyltransferase (349 aa).

5-phospho-alpha-D-ribose 1-diphosphate is bound by residues Gly-86, Gly-89 to Asp-90, Thr-94, Asn-96 to Thr-99, Lys-114 to Gly-122, and Ser-126. Gly-86 contributes to the anthranilate binding site. Ser-98 provides a ligand contact to Mg(2+). Asn-117 serves as a coordination point for anthranilate. Arg-172 contacts anthranilate. Mg(2+) is bound by residues Asp-231 and Glu-232.

The protein belongs to the anthranilate phosphoribosyltransferase family. Homodimer. Requires Mg(2+) as cofactor.

The catalysed reaction is N-(5-phospho-beta-D-ribosyl)anthranilate + diphosphate = 5-phospho-alpha-D-ribose 1-diphosphate + anthranilate. The protein operates within amino-acid biosynthesis; L-tryptophan biosynthesis; L-tryptophan from chorismate: step 2/5. Functionally, catalyzes the transfer of the phosphoribosyl group of 5-phosphorylribose-1-pyrophosphate (PRPP) to anthranilate to yield N-(5'-phosphoribosyl)-anthranilate (PRA). The polypeptide is Anthranilate phosphoribosyltransferase (Prochlorococcus marinus (strain MIT 9312)).